The primary structure comprises 293 residues: 4-hydroxy-tetrahydrodipicolinate synthase (293 aa).

Thr-45 serves as a coordination point for pyruvate. The active-site Proton donor/acceptor is the Tyr-133. Lys-162 functions as the Schiff-base intermediate with substrate in the catalytic mechanism. Ile-204 provides a ligand contact to pyruvate.

It belongs to the DapA family. As to quaternary structure, homotetramer; dimer of dimers.

Its subcellular location is the cytoplasm. It carries out the reaction L-aspartate 4-semialdehyde + pyruvate = (2S,4S)-4-hydroxy-2,3,4,5-tetrahydrodipicolinate + H2O + H(+). Its pathway is amino-acid biosynthesis; L-lysine biosynthesis via DAP pathway; (S)-tetrahydrodipicolinate from L-aspartate: step 3/4. Catalyzes the condensation of (S)-aspartate-beta-semialdehyde [(S)-ASA] and pyruvate to 4-hydroxy-tetrahydrodipicolinate (HTPA). The protein is 4-hydroxy-tetrahydrodipicolinate synthase of Chelativorans sp. (strain BNC1).